The chain runs to 278 residues: Putative ABC transporter ATP-binding protein MJ1572 (278 aa).

Positions 5-242 constitute an ABC transporter domain; the sequence is YRLVDVSYKY…LDELNLDVPE (238 aa). 38 to 45 lines the ATP pocket; that stretch reads GPNGAGKT.

It belongs to the ABC transporter superfamily.

Its subcellular location is the cell membrane. Its function is as follows. Probably part of an ABC transporter complex. Responsible for energy coupling to the transport system. This Methanocaldococcus jannaschii (strain ATCC 43067 / DSM 2661 / JAL-1 / JCM 10045 / NBRC 100440) (Methanococcus jannaschii) protein is Putative ABC transporter ATP-binding protein MJ1572.